The following is a 189-amino-acid chain: uncharacterized protein (189 aa).

Over residues 105–115 (EKLEKEEESKT) the composition is skewed to basic and acidic residues. Positions 105-189 (EKLEKEEESK…TDDEKTEVST (85 aa)) are disordered. Residues 116–136 (AKKRAKRLRQKAAAKKRKLTK) are compositionally biased toward basic residues. A compositionally biased stretch (acidic residues) spans 141–151 (SDESSSDDSDS). The segment covering 161 to 177 (SEGKQNTEVEDKDKVEK) has biased composition (basic and acidic residues). Over residues 178–189 (EETDDEKTEVST) the composition is skewed to acidic residues.

This is an uncharacterized protein from Caenorhabditis elegans.